Reading from the N-terminus, the 95-residue chain is Integration host factor subunit alpha (95 aa).

The interval 51-71 (NFDLRDKNERPGRNPKTGEDI) is disordered. Positions 53-69 (DLRDKNERPGRNPKTGE) are enriched in basic and acidic residues.

The protein belongs to the bacterial histone-like protein family. In terms of assembly, heterodimer of an alpha and a beta chain.

Its function is as follows. This protein is one of the two subunits of integration host factor, a specific DNA-binding protein that functions in genetic recombination as well as in transcriptional and translational control. The chain is Integration host factor subunit alpha from Vibrio vulnificus (strain CMCP6).